The sequence spans 209 residues: Abscisic acid receptor PYL3 (209 aa).

Residues 1 to 23 form a disordered region; that stretch reads MNLAPIHDPSSSSTTTTSSSTPY. Residues 10–21 are compositionally biased toward low complexity; sequence SSSSTTTTSSST. The START-like stretch occupies residues 43–205; it reads FPRSPNTCTS…NLQNLAVIST (163 aa). Residues lysine 79, 113–118, 140–146, and glutamate 170 contribute to the abscisate site; these read ASTSVE and RLNNYRS. The Gate loop motif lies at 109-113; the sequence is SGLPA. The short motif at 139–141 is the Latch loop element; it reads HRL.

It belongs to the PYR/PYL/RCAR abscisic acid intracellular receptor family. As to quaternary structure, homodimer and monomer. Binds ABA on one subunit only. ABA-binding favors monomer and trans-homodimer intermediate, and increases PP2C inhibitor activity. Binds both (-)-ABA and (+)-ABA. Binds to CARs protein in an ABA-independent manner, both at the plasma membrane and in the nucleus. Interacts with HAB1, ABI1 and ABI2, and possibly with other PP2Cs.

The protein localises to the cytoplasm. It localises to the nucleus. The protein resides in the cell membrane. Functionally, receptor for abscisic acid (ABA) required for ABA-mediated responses such as stomatal closure and germination inhibition. Inhibits the activity of group-A protein phosphatases type 2C (PP2Cs) when activated by ABA. Can be activated by both (-)-ABA and (+)-ABA. This is Abscisic acid receptor PYL3 (PYL3) from Arabidopsis thaliana (Mouse-ear cress).